A 245-amino-acid polypeptide reads, in one-letter code: Cell division protein ZapD (245 aa).

It belongs to the ZapD family. Interacts with FtsZ.

It is found in the cytoplasm. In terms of biological role, cell division factor that enhances FtsZ-ring assembly. Directly interacts with FtsZ and promotes bundling of FtsZ protofilaments, with a reduction in FtsZ GTPase activity. The sequence is that of Cell division protein ZapD from Photobacterium profundum (strain SS9).